Consider the following 153-residue polypeptide: Aspartate carbamoyltransferase regulatory chain (153 aa).

4 residues coordinate Zn(2+): C110, C115, C138, and C141.

Belongs to the PyrI family. Contains catalytic and regulatory chains. Zn(2+) is required as a cofactor.

In terms of biological role, involved in allosteric regulation of aspartate carbamoyltransferase. In Bacteroides thetaiotaomicron (strain ATCC 29148 / DSM 2079 / JCM 5827 / CCUG 10774 / NCTC 10582 / VPI-5482 / E50), this protein is Aspartate carbamoyltransferase regulatory chain.